The chain runs to 556 residues: MAYLMIKKSIYLFFDQPTAVGTLILAFLLTLSPVIIYYEQKKRGLRRNRTAITTTPLPEASGAWPVIGHLLLFMNENDLNHVTLGHMADKYGPIFSLRFGRHRTLVVSSWEMVKECFTGTNDKLFSNRPSSLAVKLMFYDTESYGFAPYGKYWRELRKISTHKLLSNQQLEKFKHLRISEVDNSFKKLHELCSNNKQGGDTTYVASLVRMDDWFAYLTFNVIGRIVSGFQSNAVAGATNSQEKYKLAIDEVSNLMATFAVSDVVPRLGWIDRLTGLTGKMKNCGKKLDAVVGDAVEDHRQKKLKISRNNTGALTEHEEEDFIDVCLSIMEQSQIPGNHPEISVKSIALDMLSGGSDTTKLIMTWTLSLLLNHPDILDKAKEEVDTYFGKKKISDNTPVVDAADVPNLVYIQAIIKESMRLYPASTLMERMTSDDCDVGGFHVPAGTRLWVNVWKMQRDPRVWKDPLVFLPERFLSNDKGMVDVKGQNYELIPFGTGRRICPGASFALEVLHLVLTRLILEFEMKAPEGKIDMRARPGFFHNKVVPLDVQLTPRTLD.

The chain crosses the membrane as a helical span at residues 18–38; it reads TAVGTLILAFLLTLSPVIIYY. Cys-500 lines the heme pocket.

This sequence belongs to the cytochrome P450 family. Heme is required as a cofactor. Highly expressed in capsules. Expressed is stems.

The protein resides in the membrane. It carries out the reaction (S)-cis-N-methylcanadine + reduced [NADPH--hemoprotein reductase] + O2 = (S)-1-hydroxy-N-methylcanadine + oxidized [NADPH--hemoprotein reductase] + H2O + H(+). It functions in the pathway alkaloid biosynthesis. Its function is as follows. Cytochrome P450 involved in the biosynthesis of the benzylisoquinoline alkaloid noscapine. Converts (S)-N-methylcanadine to (S)-1-hydroxy-N-methylcanadine. The protein is (S)-N-methylcanadine 1-hydroxylase CYP82Y1 of Papaver somniferum (Opium poppy).